The following is a 352-amino-acid chain: Ion-translocating oxidoreductase complex subunit D (352 aa).

The next 5 membrane-spanning stretches (helical) occupy residues 20–40 (IMLLVLLAAVPGIAAQLWFFG), 42–62 (GTLVQILLASVSALLAEALVL), 78–109 (ALLTGLLLAVSIPPLAPWWMVVLGTVFAVIIA), 123–143 (PAMIGYVVLLISFPVQMTSWL), and 148–168 (IAVNIPGFIDAIQVIFSGHTA). Threonine 187 carries the FMN phosphoryl threonine modification. A run of 5 helical transmembrane segments spans residues 214–234 (ILAGAGWQWVNLAWLAGGVWL), 242–262 (WHIPLSFLVTLALCAMLGWLF), 267–287 (LAAPQIHLLSGATMLGAFFIL), 301–321 (LIFGALAGLLVWLIRSFGGYP), and 322–342 (DGVAFAVLLANITVPLIDYYT).

Belongs to the NqrB/RnfD family. The complex is composed of six subunits: RsxA, RsxB, RsxC, RsxD, RsxE and RsxG. The cofactor is FMN.

It localises to the cell inner membrane. Its function is as follows. Part of a membrane-bound complex that couples electron transfer with translocation of ions across the membrane. Required to maintain the reduced state of SoxR. Probably transfers electron from NAD(P)H to SoxR. This chain is Ion-translocating oxidoreductase complex subunit D, found in Escherichia coli (strain K12).